Here is a 228-residue protein sequence, read N- to C-terminus: Flavin-dependent thymidylate synthase (228 aa).

Residues 1-217 (MEYKILDKGF…PWTFEAFLKF (217 aa)) form the ThyX domain. FAD is bound by residues Thr-55, 78-80 (RHR), and Glu-86. Residues 75–78 (QWFR), 86–90 (EASLR), and Arg-156 contribute to the dUMP site. The short motif at 78-88 (RHRIGSFNEAS) is the ThyX motif element. FAD-binding positions include 172–174 (NAR) and Asn-178. Position 183 (Arg-183) interacts with dUMP. Arg-183 acts as the Involved in ionization of N3 of dUMP, leading to its activation in catalysis.

This sequence belongs to the thymidylate synthase ThyX family. As to quaternary structure, homotetramer. Requires FAD as cofactor.

The enzyme catalyses dUMP + (6R)-5,10-methylene-5,6,7,8-tetrahydrofolate + NADPH + H(+) = dTMP + (6S)-5,6,7,8-tetrahydrofolate + NADP(+). It participates in pyrimidine metabolism; dTTP biosynthesis. Catalyzes the reductive methylation of 2'-deoxyuridine-5'-monophosphate (dUMP) to 2'-deoxythymidine-5'-monophosphate (dTMP) while utilizing 5,10-methylenetetrahydrofolate (mTHF) as the methyl donor, and NADPH and FADH(2) as the reductant. This Thermosipho africanus (strain TCF52B) protein is Flavin-dependent thymidylate synthase.